The primary structure comprises 375 residues: Mitogen-activated protein kinase 4a (375 aa).

A Protein kinase domain is found at 39–325 (KPPLRPIGRG…VEAALAHPYL (287 aa)). Residues 45 to 53 (IGRGAYGIV) and lysine 68 contribute to the ATP site. The active-site Proton acceptor is aspartate 165. Threonine 197 is modified (phosphothreonine). The TXY motif lies at 197–199 (TEY). Residue tyrosine 199 is modified to Phosphotyrosine.

Belongs to the protein kinase superfamily. CMGC Ser/Thr protein kinase family. MAP kinase subfamily. The cofactor is Mg(2+). Post-translationally, dually phosphorylated on Thr-197 and Tyr-199, which activates the enzyme. Phosphorylated in response to pathogen-associated molecular pattern (PAMP) chitin and in response to necrotrophic fungus B.cinerea spores. Not phosphorylated in response to osmotic stress. As to expression, expressed strongly in the apical cells of caulonemal air filaments and rhizoids in fully developed plants and less strongly, but readily detectable in filamentous protonemal tissue at the edge of the plant consisting of both chloronema and caulonema. When filamentous growth of protonema is promoted, the expression is strongest in newly formed apical tip cells of protonemal tissue.

The protein localises to the cytoplasm. It is found in the nucleus. The enzyme catalyses L-seryl-[protein] + ATP = O-phospho-L-seryl-[protein] + ADP + H(+). The catalysed reaction is L-threonyl-[protein] + ATP = O-phospho-L-threonyl-[protein] + ADP + H(+). With respect to regulation, activated by threonine and tyrosine phosphorylation. Activated in response to bacterial and fungal pathogen-associated molecular patterns (PAMPs) including chitin, chitosan and peptidyl glycans (PGNs). Activation in response to chitin requires the CERK1, MEKK1a/b, MKK1a/b/c and MPK4a/b signaling pathway. Activated in response to necrotrophic fungus B.cinerea spores. Not activated in response to osmotic stress. Its function is as follows. The CERK1, MEKK1a/b, MKK1a/b/c and MPK4a/b proteins are involved in pathogen defense. The pathway induces rapid growth inhibition, cell wall depositions and accumulation of defense-related transcripts. This protein is required for innate immunity triggered by pathogen-associated molecular patterns (PAMPs). Involved in resistance to necrotrophic fungi B.cinerea and A.brassicicola. Involved in the transduction of signals from chitosan perception to the activation of defense genes. This Physcomitrium patens (Spreading-leaved earth moss) protein is Mitogen-activated protein kinase 4a (MPK4a).